The sequence spans 985 residues: P3N-PIPO polyprotein (985 aa).

One can recognise a Peptidase S30 domain in the interval 144–287 (TFRDGHMNKF…MATVTHMEQY (144 aa)). Active-site for P1 proteinase activity residues include H195, D204, and S238. The Involved in interaction with stylet and aphid transmission motif lies at 337–340 (KLTC). Positions 595–597 (PTK) match the Involved in virions binding and aphid transmission motif. One can recognise a Peptidase C6 domain in the interval 621-743 (LYIALDGYCY…ESEIKHYRVG (123 aa)). Catalysis depends on for helper component proteinase activity residues C629 and H702.

Belongs to the potyviridae P3N-PIPO polyprotein family. Interacts (via PIPO domain) with host PCaP1 protein; this interaction may help to anchor the movement complex to the plasma membrane from which the complex could move to the plasmodesmata. Post-translationally, potyviral RNA is expressed as two polyproteins which undergo post-translational proteolytic processing. Genome polyprotein is processed by NIa-pro, P1 and HC-pro proteinases resulting in the production of at least ten individual proteins. P3N-PIPO is cleaved by P1 and HC-pro proteinases resulting in the production of three individual proteins. The P1 proteinase and the HC-pro cleave only their respective C-termini autocatalytically.

The protein localises to the host cell junction. The protein resides in the host plasmodesma. The catalysed reaction is Hydrolyzes a Gly-|-Gly bond at its own C-terminus, commonly in the sequence -Tyr-Xaa-Val-Gly-|-Gly, in the processing of the potyviral polyprotein.. Its function is as follows. Required for aphid transmission and also has proteolytic activity. Only cleaves a Gly-Gly dipeptide at its own C-terminus. Interacts with virions and aphid stylets. Acts as a suppressor of RNA-mediated gene silencing, also known as post-transcriptional gene silencing (PTGS), a mechanism of plant viral defense that limits the accumulation of viral RNAs. May have RNA-binding activity. Allows efficient cell to cell propagation, by bypassing the host cell wall barrier. Transports viral genome to neighboring plant cells directly through plasmosdesmata, without any budding. This is P3N-PIPO polyprotein from Pepper mottle virus (isolate California) (PeMV).